Consider the following 185-residue polypeptide: Dual-action ribosomal maturation protein DarP (185 aa).

It belongs to the DarP family.

The protein resides in the cytoplasm. In terms of biological role, member of a network of 50S ribosomal subunit biogenesis factors which assembles along the 30S-50S interface, preventing incorrect 23S rRNA structures from forming. Promotes peptidyl transferase center (PTC) maturation. This Vibrio vulnificus (strain YJ016) protein is Dual-action ribosomal maturation protein DarP.